Here is a 73-residue protein sequence, read N- to C-terminus: Translational regulator CsrA (73 aa).

This sequence belongs to the CsrA/RsmA family. Homodimer; the beta-strands of each monomer intercalate to form a hydrophobic core, while the alpha-helices form wings that extend away from the core.

It localises to the cytoplasm. A translational regulator that binds mRNA to regulate translation initiation and/or mRNA stability. Usually binds in the 5'-UTR at or near the Shine-Dalgarno sequence preventing ribosome-binding, thus repressing translation. Its main target seems to be the major flagellin gene, while its function is anatagonized by FliW. In Thermosipho africanus (strain TCF52B), this protein is Translational regulator CsrA.